The following is a 181-amino-acid chain: Ribulose bisphosphate carboxylase small subunit, chloroplastic 6 (181 aa).

A chloroplast-targeting transit peptide spans 1–57 (MASSIVSSAAVATRSNVAQASMVAPFTGLKSAASFPVTKKNNNVDITSLASNGGRVR).

This sequence belongs to the RuBisCO small chain family. As to quaternary structure, heterohexadecamer of 8 large and 8 small subunits.

The protein localises to the plastid. The protein resides in the chloroplast. Its function is as follows. RuBisCO catalyzes two reactions: the carboxylation of D-ribulose 1,5-bisphosphate, the primary event in carbon dioxide fixation, as well as the oxidative fragmentation of the pentose substrate. Both reactions occur simultaneously and in competition at the same active site. Although the small subunit is not catalytic it is essential for maximal activity. The protein is Ribulose bisphosphate carboxylase small subunit, chloroplastic 6 of Solanum tuberosum (Potato).